The chain runs to 757 residues: Inhibitor of nuclear factor kappa-B kinase subunit beta (757 aa).

Residues 15–300 (WEMKERLGTG…DPQYGPNGCF (286 aa)) form the Protein kinase domain. ATP is bound by residues 21–29 (LGTGGFGNV) and Lys44. Residue Asp145 is the Proton acceptor of the active site. Residue Lys163 forms a Glycyl lysine isopeptide (Lys-Gly) (interchain with G-Cter in ubiquitin) linkage. Phosphoserine; by TBK1 and PKC/PRKCZ is present on Ser177. Residue Cys179 is modified to S-nitrosocysteine. Ser181 bears the Phosphoserine; by TBK1, PKC/PRKCZ and PDPK1 mark. Pro191 is subject to Hydroxyproline. The tract at residues 458–479 (LLRNNSCLSKMKNAMASTAQQL) is leucine-zipper. Phosphoserine; by autocatalysis is present on Ser670. Ser672 carries the phosphoserine modification. 8 positions are modified to phosphoserine; by autocatalysis: Ser675, Ser682, Ser689, Ser692, Ser697, Ser705, Ser733, and Ser740. A disordered region spans residues 682–703 (SHPGHLMSQPSSACDSLPDSDK). The segment at 737-742 (LDWSWL) is NEMO-binding.

The protein belongs to the protein kinase superfamily. Ser/Thr protein kinase family. I-kappa-B kinase subfamily. Component of the I-kappa-B-kinase (IKK) core complex consisting of CHUK, IKBKB and IKBKG; probably four alpha/CHUK-beta/IKBKB dimers are associated with four gamma/IKBKG subunits. The IKK core complex seems to associate with regulatory or adapter proteins to form a IKK-signalosome holo-complex. The IKK complex associates with TERF2IP/RAP1, leading to promote IKK-mediated phosphorylation of RELA/p65. Part of a complex composed of NCOA2, NCOA3, CHUK/IKKA, IKBKB, IKBKG and CREBBP. Part of a 70-90 kDa complex at least consisting of CHUK/IKKA, IKBKB, NFKBIA, RELA, ELP1 and MAP3K14. Found in a membrane raft complex, at least composed of BCL10, CARD11, DPP4 and IKBKB. Interacts with SQSTM1 through PRKCZ or PRKCI. Forms an NGF-induced complex with IKBKB, PRKCI and TRAF6. May interact with MAVS/IPS1. Interacts with NALP2. Interacts with TICAM1. Interacts with FAF1; the interaction disrupts the IKK complex formation. Interacts with ATM. Part of a ternary complex consisting of TANK, IKBKB and IKBKG. Interacts with NIBP; the interaction is direct. Interacts with ARRB1 and ARRB2. Interacts with TRIM21. Interacts with NLRC5; prevents IKBKB phosphorylation and kinase activity. Interacts with PDPK1. Interacts with EIF2AK2/PKR. The phosphorylated form interacts with PPM1A and PPM1B. Interacts with ZNF268 isoform 2; the interaction is further increased in a TNF-alpha-dependent manner. Interacts with IKBKE. Interacts with ZC3H12A. Interacts with AKAP13. Interacts with LRRC14; disrupts IKBKB-IKBKG interaction preventing I-kappa-B-kinase (IKK) core complex formation and leading to a decrease of IKBKB phosphorylation and NF-kappaB activation. Interacts with SASH1. Interacts with ARFIP2. Interacts with FKBP5. Upon cytokine stimulation, phosphorylated on Ser-177 and Ser-181 by MEKK1 and/or MAP3K14/NIK as well as TBK1 and PRKCZ; which enhances activity. Phosphorylated by MAP3K7/TAK1 in response to NOD1 and NOD2 signaling, promoting activation and phosphorylation of NF-kappa-B inhibitors, leading to NF-kappa-B activation. Once activated, autophosphorylates on the C-terminal serine cluster; which decreases activity and prevents prolonged activation of the inflammatory response. Phosphorylated by the IKK-related kinases TBK1 and IKBKE, which is associated with reduced CHUK/IKKA and IKBKB activity and NF-kappa-B-dependent gene transcription. Dephosphorylated at Ser-177 and Ser-181 by PPM1A and PPM1B. Post-translationally, ubiquitinated. Monoubiquitination involves TRIM21 that leads to inhibition of Tax-induced NF-kappa-B signaling. 'Ser-163' may not serve as a monoubiquitination site. Ubiquitination on 'Ser-163' may modulate phosphorylation on C-terminal serine residues. In terms of processing, hydroxylated by PHD1/EGLN2, loss of hydroxylation under hypoxic conditions results in activation of NF-kappa-B.

The protein resides in the cytoplasm. It is found in the nucleus. Its subcellular location is the membrane raft. The enzyme catalyses L-seryl-[I-kappa-B protein] + ATP = O-phospho-L-seryl-[I-kappa-B protein] + ADP + H(+). It carries out the reaction L-seryl-[protein] + ATP = O-phospho-L-seryl-[protein] + ADP + H(+). It catalyses the reaction L-threonyl-[protein] + ATP = O-phospho-L-threonyl-[protein] + ADP + H(+). In terms of biological role, serine kinase that plays an essential role in the NF-kappa-B signaling pathway which is activated by multiple stimuli such as inflammatory cytokines, bacterial or viral products, DNA damages or other cellular stresses. Acts as a part of the canonical IKK complex in the conventional pathway of NF-kappa-B activation. Phosphorylates inhibitors of NF-kappa-B on 2 critical serine residues. These modifications allow polyubiquitination of the inhibitors and subsequent degradation by the proteasome. In turn, free NF-kappa-B is translocated into the nucleus and activates the transcription of hundreds of genes involved in immune response, growth control, or protection against apoptosis. In addition to the NF-kappa-B inhibitors, phosphorylates several other components of the signaling pathway including NEMO/IKBKG, NF-kappa-B subunits RELA and NFKB1, as well as IKK-related kinases TBK1 and IKBKE. IKK-related kinase phosphorylations may prevent the overproduction of inflammatory mediators since they exert a negative regulation on canonical IKKs. Phosphorylates FOXO3, mediating the TNF-dependent inactivation of this pro-apoptotic transcription factor. Also phosphorylates other substrates including NAA10, NCOA3, BCL10 and IRS1. Phosphorylates RIPK1 at 'Ser-25' which represses its kinase activity and consequently prevents TNF-mediated RIPK1-dependent cell death. Phosphorylates the C-terminus of IRF5, stimulating IRF5 homodimerization and translocation into the nucleus. This Rattus norvegicus (Rat) protein is Inhibitor of nuclear factor kappa-B kinase subunit beta (Ikbkb).